We begin with the raw amino-acid sequence, 262 residues long: Putative hydro-lyase cu1581 (262 aa).

It belongs to the D-glutamate cyclase family.

The chain is Putative hydro-lyase cu1581 from Corynebacterium urealyticum (strain ATCC 43042 / DSM 7109).